The chain runs to 337 residues: 1-aminocyclopropane-1-carboxylate deaminase (337 aa).

Lysine 50 bears the N6-(pyridoxal phosphate)lysine mark. Serine 77 acts as the Nucleophile in catalysis.

The protein belongs to the ACC deaminase/D-cysteine desulfhydrase family. As to quaternary structure, homotrimer. It depends on pyridoxal 5'-phosphate as a cofactor.

It carries out the reaction 1-aminocyclopropane-1-carboxylate + H2O = 2-oxobutanoate + NH4(+). Functionally, catalyzes a cyclopropane ring-opening reaction, the irreversible conversion of 1-aminocyclopropane-1-carboxylate (ACC) to ammonia and alpha-ketobutyrate. Allows growth on ACC as a nitrogen source. This Rhizobium rhizogenes (strain K84 / ATCC BAA-868) (Agrobacterium radiobacter) protein is 1-aminocyclopropane-1-carboxylate deaminase.